The following is a 311-amino-acid chain: Putative S-adenosyl-L-methionine-dependent methyltransferase MUL_4761 (311 aa).

S-adenosyl-L-methionine-binding positions include Asp132 and Asp161–Leu162.

The protein belongs to the UPF0677 family.

Exhibits S-adenosyl-L-methionine-dependent methyltransferase activity. In Mycobacterium ulcerans (strain Agy99), this protein is Putative S-adenosyl-L-methionine-dependent methyltransferase MUL_4761.